Here is a 281-residue protein sequence, read N- to C-terminus: Tetraspanin-33 (281 aa).

Over 1-23 the chain is Cytoplasmic; that stretch reads MGNAKRATQNDEDYTFVSPVVKY. Residues 24–44 form a helical membrane-spanning segment; it reads LLFFFNMIFWIISLVLISIGV. Residues 45 to 62 are Extracellular-facing; the sequence is YSRIVKHETALACLTVDP. The chain crosses the membrane as a helical span at residues 63–83; sequence ALILMVVGILMFFITFCGCVG. At 84–94 the chain is on the cytoplasmic side; it reads SLRENICLLQT. Residues 95-115 form a helical membrane-spanning segment; that stretch reads FCIFLTIMFLLQLLAGVLGFV. Over 116-233 the chain is Extracellular; sequence FSDKARGKVT…DILVNWIHSN (118 aa). 4 disulfides stabilise this stretch: cysteine 154/cysteine 222, cysteine 155/cysteine 187, cysteine 171/cysteine 181, and cysteine 188/cysteine 201. Residue asparagine 170 is glycosylated (N-linked (GlcNAc...) asparagine). The chain crosses the membrane as a helical span at residues 234–254; that stretch reads LFLLGGIALGLTIPQLVGILL. Residues 255–281 lie on the Cytoplasmic side of the membrane; the sequence is SQVLINQIQDQIKLQNYNQQHRSDPWS.

The protein belongs to the tetraspanin (TM4SF) family. Homodimer; disulfide-linked.

Its subcellular location is the cell membrane. It is found in the cell junction. The protein localises to the adherens junction. It localises to the cytoplasm. Functionally, part of TspanC8 subgroup, composed of 6 members that interact with the transmembrane metalloprotease ADAM10. This interaction is required for ADAM10 exit from the endoplasmic reticulum and for enzymatic maturation and trafficking to the cell surface as well as substrate specificity. Different TspanC8/ADAM10 complexes have distinct substrates. The protein is Tetraspanin-33 (tspan33) of Danio rerio (Zebrafish).